Reading from the N-terminus, the 385-residue chain is Tuliposide A-converting enzyme 1, chloroplastic (385 aa).

The transit peptide at 1–77 (MSVASFFSSL…PSPSLSPTPT (77 aa)) directs the protein to the chloroplast. Ser-235 serves as the catalytic Acyl-ester intermediate. Residues Asp-327 and His-359 each act as charge relay system in the active site.

The protein belongs to the AB hydrolase superfamily. Homodimer. In terms of tissue distribution, expressed in roots, stems, leaves, petals, stamens and pistils, but not in bulb scales.

Its subcellular location is the plastid. The protein localises to the chloroplast. It catalyses the reaction 6-tuliposide A = tulipalin A + D-glucose. Its activity is regulated as follows. Inhibited by NaF, AgNO(3), HgCl(2), CuSO(4) and phenylmethylsulfonyl fluoride (PMSF). Functionally, lactone-forming carboxylesterases, specifically catalyzing intramolecular transesterification, but not hydrolysis. Involved in the biosynthesis of tulipalins, defensive chemicals that show antimicrobial activities against a broad range of strains of bacteria and fungi. Substrates are 6-tuliposide A &gt; 6-tuliposide B. In Tulipa gesneriana (Garden tulip), this protein is Tuliposide A-converting enzyme 1, chloroplastic (TCEA1).